An 86-amino-acid polypeptide reads, in one-letter code: Apolipoprotein C-I (86 aa).

An N-terminal signal peptide occupies residues 1 to 26 (MRLFLSLPVLVVVLLMILEGPGPAQG).

This sequence belongs to the apolipoprotein C1 family.

The protein localises to the secreted. Its function is as follows. Inhibitor of lipoprotein binding to the low density lipoprotein (LDL) receptor, LDL receptor-related protein, and very low density lipoprotein (VLDL) receptor. Associates with high density lipoproteins (HDL) and the triacylglycerol-rich lipoproteins in the plasma and makes up about 10% of the protein of the VLDL and 2% of that of HDL. Appears to interfere directly with fatty acid uptake and is also the major plasma inhibitor of cholesteryl ester transfer protein (CETP). Binds free fatty acids and reduces their intracellular esterification. Modulates the interaction of APOE with beta-migrating VLDL and inhibits binding of beta-VLDL to the LDL receptor-related protein. In Ateles geoffroyi (Black-handed spider monkey), this protein is Apolipoprotein C-I (APOC1).